Consider the following 509-residue polypeptide: Telomeric repeat-binding factor 2-interacting protein 1 (509 aa).

Positions 1–91 (MAALGGLTHS…KLLDVDDYRL (91 aa)) constitute a BRCT domain. The interval 93–168 (GSHGRPRKSQ…RKKENKMDCS (76 aa)) is disordered. The span at 115–127 (VGESSQESDQKQQ) shows a compositional bias: polar residues. A compositionally biased stretch (basic and acidic residues) spans 159 to 168 (RKKENKMDCS). In terms of domain architecture, Myb-like spans 185–239 (RRNVFTEKEDVAIMLYVRENAPHRGTGVSLWKEMEQKQVVKRTWQAIKNRYFRYL). Disordered stretches follow at residues 249 to 359 (LTDD…ENQD) and 399 to 423 (DLPSSQSQTQVDEVSSSPDASESEG). Basic and acidic residues-rich tracts occupy residues 286-296 (GVAEKTGEKLS) and 321-344 (VEERGQEVTEGAIKRSEGNKKSTE). Over residues 401–418 (PSSQSQTQVDEVSSSPDA) the composition is skewed to polar residues. The Nuclear localization signal motif lies at 493–509 (QKYGADNVAKRVAFLAS).

This sequence belongs to the RAP1 family. As to quaternary structure, homodimer. Component of the shelterin complex (telosome). Interacts with terf2; the interaction is direct.

The protein localises to the nucleus. It localises to the chromosome. Its subcellular location is the telomere. In terms of biological role, acts both as a regulator of telomere function and as a transcription regulator. Involved in the regulation of telomere length and protection as a component of the shelterin complex (telosome). Does not bind DNA directly: recruited to telomeric double-stranded 5'-TTAGGG-3' repeats via its interaction with terf2. Independently of its function in telomeres, also acts as a transcription regulator: recruited to extratelomeric 5'-TTAGGG-3' sites via its association with terf2 or other factors, and regulates gene expression. The chain is Telomeric repeat-binding factor 2-interacting protein 1 (terf2ip) from Xenopus tropicalis (Western clawed frog).